The following is a 173-amino-acid chain: Photosystem I assembly protein Ycf3 (173 aa).

TPR repeat units follow at residues 35–68 (AFVY…EEDP), 72–105 (SYIL…NPRM), and 120–153 (GEKA…APNN).

Belongs to the Ycf3 family.

It is found in the cellular thylakoid membrane. Its function is as follows. Essential for the assembly of the photosystem I (PSI) complex. May act as a chaperone-like factor to guide the assembly of the PSI subunits. The polypeptide is Photosystem I assembly protein Ycf3 (Microcystis aeruginosa (strain NIES-843 / IAM M-2473)).